The following is a 287-amino-acid chain: D-apionate oxidoisomerase (287 aa).

Residues 13 to 15 (GKM), Glu-36, and Asp-71 contribute to the NAD(+) site. Zn(2+)-binding residues include His-116 and Glu-186.

The protein belongs to the ApnO family. Zn(2+) is required as a cofactor.

It catalyses the reaction D-apionate + NAD(+) = 3-oxoisoapionate + NADH + H(+). Its pathway is carbohydrate metabolism. Its function is as follows. Involved in catabolism of D-apiose. Catalyzes the conversion of D-apionate to 3-oxo-isoapionate. This is D-apionate oxidoisomerase from Blautia hydrogenotrophica (strain DSM 10507 / JCM 14656 / S5a33) (Ruminococcus hydrogenotrophicus).